The following is a 428-amino-acid chain: UPF0597 protein BF3772 (428 aa).

Belongs to the UPF0597 family.

This Bacteroides fragilis (strain YCH46) protein is UPF0597 protein BF3772.